We begin with the raw amino-acid sequence, 154 residues long: Putative pre-16S rRNA nuclease (154 aa).

This sequence belongs to the YqgF nuclease family.

It localises to the cytoplasm. Functionally, could be a nuclease involved in processing of the 5'-end of pre-16S rRNA. This is Putative pre-16S rRNA nuclease from Rickettsia felis (strain ATCC VR-1525 / URRWXCal2) (Rickettsia azadi).